Here is a 94-residue protein sequence, read N- to C-terminus: Putative defensin-like protein 88 (94 aa).

Residues methionine 1 to serine 26 form the signal peptide. Cystine bridges form between cysteine 32-cysteine 72, cysteine 38-cysteine 59, and cysteine 48-cysteine 71.

The protein belongs to the DEFL family.

Its subcellular location is the secreted. In Arabidopsis thaliana (Mouse-ear cress), this protein is Putative defensin-like protein 88.